A 2867-amino-acid polypeptide reads, in one-letter code: Reticulocyte-binding protein 2 (2867 aa).

An N-terminal signal peptide occupies residues 1 to 21 (MEKNVLWVIFYNFLVILLASC). Topologically, residues 22 to 2805 (NDSNRSKSNS…TAKEAIGKTR (2784 aa)) are extracellular. 3 disordered regions span residues 52-73 (KYNN…NNHN), 2650-2682 (ETKT…ASVP), and 2712-2799 (DNTH…TAKE). Residues 61-73 (NIGNQINNDNNHN) show a composition bias toward low complexity. Residues 2659-2674 (KAKEEKVPPKETENRA) show a composition bias toward basic and acidic residues. Polar residues predominate over residues 2725 to 2736 (DSISAPQEQVEY). Residues 2743–2754 (ENDETTEEESEH) are compositionally biased toward acidic residues. Positions 2755–2799 (DDAHDDTHDDTHDDTHDDTHDDTHDDTHDDTHDESQTGRDSTAKE) are enriched in basic and acidic residues. 7 repeat units span residues 2758–2761 (HDDT), 2762–2765 (HDDT), 2766–2769 (HDDT), 2770–2773 (HDDT), 2774–2777 (HDDT), 2778–2781 (HDDT), and 2782–2785 (HDDT). A 7 X 4 AA tandem repeats of H-D-D-T region spans residues 2758–2785 (HDDTHDDTHDDTHDDTHDDTHDDTHDDT). The helical transmembrane segment at 2806-2826 (LAGAVIIAMSVLSGFIIIVFK) threads the bilayer. The Cytoplasmic segment spans residues 2827 to 2867 (DKDEEEKDHNEHGYNEAFGEHDEYNMHDKEEVIEVCFNEED).

It localises to the cell membrane. Its function is as follows. Involved in reticulocyte adhesion. Specifically binds to human reticulocyte cells. In Plasmodium vivax (strain Belem), this protein is Reticulocyte-binding protein 2 (RBP-2).